Consider the following 112-residue polypeptide: Ribonuclease P protein component (112 aa).

Belongs to the RnpA family. As to quaternary structure, consists of a catalytic RNA component (M1 or rnpB) and a protein subunit.

The catalysed reaction is Endonucleolytic cleavage of RNA, removing 5'-extranucleotides from tRNA precursor.. Functionally, RNaseP catalyzes the removal of the 5'-leader sequence from pre-tRNA to produce the mature 5'-terminus. It can also cleave other RNA substrates such as 4.5S RNA. The protein component plays an auxiliary but essential role in vivo by binding to the 5'-leader sequence and broadening the substrate specificity of the ribozyme. This is Ribonuclease P protein component from Pelotomaculum thermopropionicum (strain DSM 13744 / JCM 10971 / SI).